A 499-amino-acid chain; its full sequence is NADH-quinone oxidoreductase subunit N (499 aa).

A run of 14 helical transmembrane segments spans residues 16-36 (AAFS…LDAF), 42-62 (AIPW…ITHL), 77-97 (GGFV…TILL), 109-129 (YGEV…LGSA), 133-153 (VSIF…TGFI), 167-187 (FLLG…MYGA), 208-228 (LLFW…VSAA), 252-272 (ATKA…VPGG), 274-294 (WQLS…VMAL), 302-322 (LLAY…SAGT), 327-347 (AGAL…FGVM), 376-396 (GSTM…GGFI), 411-433 (TWLV…RVVY), and 463-483 (GTLV…GGVL).

This sequence belongs to the complex I subunit 2 family. As to quaternary structure, NDH-1 is composed of 14 different subunits. Subunits NuoA, H, J, K, L, M, N constitute the membrane sector of the complex.

It is found in the cell inner membrane. The enzyme catalyses a quinone + NADH + 5 H(+)(in) = a quinol + NAD(+) + 4 H(+)(out). In terms of biological role, NDH-1 shuttles electrons from NADH, via FMN and iron-sulfur (Fe-S) centers, to quinones in the respiratory chain. The immediate electron acceptor for the enzyme in this species is believed to be a menaquinone. Couples the redox reaction to proton translocation (for every two electrons transferred, four hydrogen ions are translocated across the cytoplasmic membrane), and thus conserves the redox energy in a proton gradient. The chain is NADH-quinone oxidoreductase subunit N from Salinibacter ruber (strain DSM 13855 / M31).